A 189-amino-acid polypeptide reads, in one-letter code: Large ribosomal subunit protein uL10 (189 aa).

It belongs to the universal ribosomal protein uL10 family. Part of the ribosomal stalk of the 50S ribosomal subunit. The N-terminus interacts with L11 and the large rRNA to form the base of the stalk. The C-terminus forms an elongated spine to which L12 dimers bind in a sequential fashion forming a multimeric L10(L12)X complex.

In terms of biological role, forms part of the ribosomal stalk, playing a central role in the interaction of the ribosome with GTP-bound translation factors. In Rippkaea orientalis (strain PCC 8801 / RF-1) (Cyanothece sp. (strain PCC 8801)), this protein is Large ribosomal subunit protein uL10.